Here is a 252-residue protein sequence, read N- to C-terminus: Imidazole glycerol phosphate synthase subunit HisF (252 aa).

Active-site residues include D11 and D130.

Belongs to the HisA/HisF family. Heterodimer of HisH and HisF.

Its subcellular location is the cytoplasm. The enzyme catalyses 5-[(5-phospho-1-deoxy-D-ribulos-1-ylimino)methylamino]-1-(5-phospho-beta-D-ribosyl)imidazole-4-carboxamide + L-glutamine = D-erythro-1-(imidazol-4-yl)glycerol 3-phosphate + 5-amino-1-(5-phospho-beta-D-ribosyl)imidazole-4-carboxamide + L-glutamate + H(+). The protein operates within amino-acid biosynthesis; L-histidine biosynthesis; L-histidine from 5-phospho-alpha-D-ribose 1-diphosphate: step 5/9. Its function is as follows. IGPS catalyzes the conversion of PRFAR and glutamine to IGP, AICAR and glutamate. The HisF subunit catalyzes the cyclization activity that produces IGP and AICAR from PRFAR using the ammonia provided by the HisH subunit. In Citrifermentans bemidjiense (strain ATCC BAA-1014 / DSM 16622 / JCM 12645 / Bem) (Geobacter bemidjiensis), this protein is Imidazole glycerol phosphate synthase subunit HisF.